Consider the following 447-residue polypeptide: BAG family molecular chaperone regulator 5 (447 aa).

BAG domains lie at 9–86 (SISR…EQNA), 95–167 (QNIF…EDCM), 182–260 (SVAK…DLEE), 275–350 (SILK…DLKE), and 365–442 (SHKA…DLKS).

In terms of assembly, binds to the ATPase domain of HSP/HSP70 chaperones. Binds PRKN. Interacts with HSPA8 and JPH2. As to expression, expressed in the heart.

Its function is as follows. Co-chaperone for HSP/HSP70 proteins. It functions as a nucleotide-exchange factor promoting the release of ADP from HSP70, thereby activating HSP70-mediated protein refolding. Has an essential role in maintaining proteostasis at junctional membrane complexes (JMC), where it may function as a scaffold between the HSPA8 chaperone and JMC proteins enabling correct, HSPA8-dependent JMC protein folding. Inhibits both auto-ubiquitination of PRKN and ubiquitination of target proteins by PRKN. The protein is BAG family molecular chaperone regulator 5 (BAG5) of Homo sapiens (Human).